Consider the following 162-residue polypeptide: Peroxiredoxin-2D (162 aa).

One can recognise a Thioredoxin domain in the interval 4 to 162 (ITVGDVVPDG…SSAEDILKAL (159 aa)). Cysteine 51 functions as the Cysteine sulfenic acid (-SOH) intermediate in the catalytic mechanism.

The protein belongs to the peroxiredoxin family. Prx5 subfamily. Monomer. Exclusively expressed in buds and flowers. Also detected in pollen.

The protein localises to the cytoplasm. The enzyme catalyses [glutaredoxin]-dithiol + a hydroperoxide = [glutaredoxin]-disulfide + an alcohol + H2O. In terms of biological role, thiol-specific peroxidase that catalyzes the reduction of hydrogen peroxide and organic hydroperoxides to water and alcohols, respectively. Plays a role in cell protection against oxidative stress by detoxifying peroxides. May be involved in intracellular redox signaling. The protein is Peroxiredoxin-2D (PRXIID) of Arabidopsis thaliana (Mouse-ear cress).